Consider the following 286-residue polypeptide: MKKQLFILSQYLLPHHLLSRLAGCIAECRVRWFKNAFTAWFAKRYQVDMSQALVEDLTAYEHFNAFFTRALKDGARPLDQTPGAVLSPADGAVSQLGPIEHGRVFQAKGHSFSVLELLGGDAALSAPFMGGDFATVYLSPKDYHRVHMPLAGTLREMVYIPGRIFSVNQTTAENVPELFARNERVACIFDTERGPMAVVLVGAMIVASIETVWAGLVTPPKRELKTFRYDEAARAPIHLEKGAELGRFKLGSTAIVLFGPDQVKWAEELVAGSPVQMGQGIAAPKA.

Active-site charge relay system; for autoendoproteolytic cleavage activity residues include D90, H147, and S252. S252 serves as the catalytic Schiff-base intermediate with substrate; via pyruvic acid; for decarboxylase activity. The residue at position 252 (S252) is a Pyruvic acid (Ser); by autocatalysis.

It belongs to the phosphatidylserine decarboxylase family. PSD-B subfamily. Prokaryotic type I sub-subfamily. As to quaternary structure, heterodimer of a large membrane-associated beta subunit and a small pyruvoyl-containing alpha subunit. The cofactor is pyruvate. In terms of processing, is synthesized initially as an inactive proenzyme. Formation of the active enzyme involves a self-maturation process in which the active site pyruvoyl group is generated from an internal serine residue via an autocatalytic post-translational modification. Two non-identical subunits are generated from the proenzyme in this reaction, and the pyruvate is formed at the N-terminus of the alpha chain, which is derived from the carboxyl end of the proenzyme. The autoendoproteolytic cleavage occurs by a canonical serine protease mechanism, in which the side chain hydroxyl group of the serine supplies its oxygen atom to form the C-terminus of the beta chain, while the remainder of the serine residue undergoes an oxidative deamination to produce ammonia and the pyruvoyl prosthetic group on the alpha chain. During this reaction, the Ser that is part of the protease active site of the proenzyme becomes the pyruvoyl prosthetic group, which constitutes an essential element of the active site of the mature decarboxylase.

The protein resides in the cell membrane. It catalyses the reaction a 1,2-diacyl-sn-glycero-3-phospho-L-serine + H(+) = a 1,2-diacyl-sn-glycero-3-phosphoethanolamine + CO2. It functions in the pathway phospholipid metabolism; phosphatidylethanolamine biosynthesis; phosphatidylethanolamine from CDP-diacylglycerol: step 2/2. In terms of biological role, catalyzes the formation of phosphatidylethanolamine (PtdEtn) from phosphatidylserine (PtdSer). This Pseudomonas fluorescens (strain SBW25) protein is Phosphatidylserine decarboxylase proenzyme.